Consider the following 249-residue polypeptide: Coproheme decarboxylase (249 aa).

Residue Y145 is part of the active site. Residues 145 to 149 and H172 contribute to the Fe-coproporphyrin III site; that span reads YPMAR.

It belongs to the ChdC family. Type 1 subfamily. Requires Fe-coproporphyrin III as cofactor.

The catalysed reaction is Fe-coproporphyrin III + 2 H2O2 + 2 H(+) = heme b + 2 CO2 + 4 H2O. It catalyses the reaction Fe-coproporphyrin III + H2O2 + H(+) = harderoheme III + CO2 + 2 H2O. The enzyme catalyses harderoheme III + H2O2 + H(+) = heme b + CO2 + 2 H2O. It participates in porphyrin-containing compound metabolism; protoheme biosynthesis. Involved in coproporphyrin-dependent heme b biosynthesis. Catalyzes the decarboxylation of Fe-coproporphyrin III (coproheme) to heme b (protoheme IX), the last step of the pathway. The reaction occurs in a stepwise manner with a three-propionate intermediate. The protein is Coproheme decarboxylase of Oceanobacillus iheyensis (strain DSM 14371 / CIP 107618 / JCM 11309 / KCTC 3954 / HTE831).